Here is a 901-residue protein sequence, read N- to C-terminus: Probable inorganic carbon transporter subunit DabA (901 aa).

The Zn(2+) site is built by cysteine 424, aspartate 426, histidine 606, and cysteine 621.

It belongs to the inorganic carbon transporter (TC 9.A.2) DabA family. In terms of assembly, forms a complex with DabB. Requires Zn(2+) as cofactor.

The protein resides in the cell membrane. Functionally, part of an energy-coupled inorganic carbon pump. The sequence is that of Probable inorganic carbon transporter subunit DabA from Staphylococcus aureus (strain MSSA476).